A 116-amino-acid chain; its full sequence is Flagellar transcriptional regulator FlhD (116 aa).

The protein belongs to the FlhD family. In terms of assembly, homodimer; disulfide-linked. Forms a heterohexamer composed of two FlhC and four FlhD subunits. Each FlhC binds a FlhD dimer, forming a heterotrimer, and a hexamer assembles by dimerization of two heterotrimers.

It localises to the cytoplasm. Its function is as follows. Functions in complex with FlhC as a master transcriptional regulator that regulates transcription of several flagellar and non-flagellar operons by binding to their promoter region. Activates expression of class 2 flagellar genes, including fliA, which is a flagellum-specific sigma factor that turns on the class 3 genes. Also regulates genes whose products function in a variety of physiological pathways. The polypeptide is Flagellar transcriptional regulator FlhD (Salmonella arizonae (strain ATCC BAA-731 / CDC346-86 / RSK2980)).